Here is a 139-residue protein sequence, read N- to C-terminus: D-ribose pyranase (139 aa).

The active-site Proton donor is His-20. Residues Asp-28, His-106, and 128 to 130 contribute to the substrate site; that span reads YAN.

Belongs to the RbsD / FucU family. RbsD subfamily. In terms of assembly, homodecamer.

It is found in the cytoplasm. The catalysed reaction is beta-D-ribopyranose = beta-D-ribofuranose. Its pathway is carbohydrate metabolism; D-ribose degradation; D-ribose 5-phosphate from beta-D-ribopyranose: step 1/2. In terms of biological role, catalyzes the interconversion of beta-pyran and beta-furan forms of D-ribose. In Salmonella typhi, this protein is D-ribose pyranase.